A 228-amino-acid chain; its full sequence is Sec-independent protein translocase protein TatB (228 aa).

Residues 1–21 form a helical membrane-spanning segment; the sequence is MFDFGLGELVFVGIIALIVLG. 2 disordered regions span residues 109-162 and 197-228; these read DFGV…AETD and PHTTSLRKQAISRKRDFRPKHRAKPKLRVRKS. The segment covering 206–228 has biased composition (basic residues); that stretch reads AISRKRDFRPKHRAKPKLRVRKS.

The protein belongs to the TatB family. The Tat system comprises two distinct complexes: a TatABC complex, containing multiple copies of TatA, TatB and TatC subunits, and a separate TatA complex, containing only TatA subunits. Substrates initially bind to the TatABC complex, which probably triggers association of the separate TatA complex to form the active translocon.

It localises to the cell inner membrane. Its function is as follows. Part of the twin-arginine translocation (Tat) system that transports large folded proteins containing a characteristic twin-arginine motif in their signal peptide across membranes. Together with TatC, TatB is part of a receptor directly interacting with Tat signal peptides. TatB may form an oligomeric binding site that transiently accommodates folded Tat precursor proteins before their translocation. The sequence is that of Sec-independent protein translocase protein TatB from Neisseria meningitidis serogroup B (strain ATCC BAA-335 / MC58).